A 528-amino-acid polypeptide reads, in one-letter code: Movement protein TGB1 (528 aa).

Over residues 1 to 13 the composition is skewed to basic and acidic residues; that stretch reads MDMTKTVEEKKTN. The segment at 1–143 is disordered; that stretch reads MDMTKTVEEK…TKGSSQVGEN (143 aa). Tandem repeats lie at residues 52 to 77 and 78 to 103. The tract at residues 52–103 is 2 X 26 AA tandem repeats; that stretch reads VADQTPLSVDNGAKSKLDSSDRQVPGVADQTPLSVDNGAKSKLDSSDRQVPG. Residues 75–491 form an interaction with the suppressor of RNA silencing Gamma-B region; the sequence is VPGVADQTPL…KSKLIIRADA (417 aa). The segment covering 109-119 has biased composition (basic residues); the sequence is NVKKSKKKRIQ. Positions 111 to 120 are nucleolar localization signal; the sequence is KKSKKKRIQK. One can recognise a (+)RNA virus helicase ATP-binding domain in the interval 236–379; that stretch reads ARACTLERER…YLTLPVIYRS (144 aa). Residues 243–254 form a nuclear localization signal region; sequence RERLKRKLLLVR. Position 269-276 (269-276) interacts with ATP; sequence GVPGSGKS. Positions 380 to 520 constitute a (+)RNA virus helicase C-terminal domain; it reads ETTYRLGQET…SHRYSAKPDE (141 aa). The tract at residues 508–528 is disordered; that stretch reads ASNSHRYSAKPDEDHSWFKAK. Basic and acidic residues predominate over residues 516-528; that stretch reads AKPDEDHSWFKAK.

It belongs to the virgaviridae/benyvirus TGB1 movement protein family. As to quaternary structure, homooligomer. Interacts with movement protein TGB3. TGB1-TGB3-TGB2 complex formation is enhanced by ATP hydrolysis. Interacts with the suppressor of RNA silencing Gamma-B (via N-terminus). The cofactor is Mg(2+).

The protein resides in the host cell junction. The protein localises to the host plasmodesma. It localises to the host nucleus. It is found in the host cytoplasm. Its subcellular location is the host nucleolus. The protein resides in the host cytoskeleton. The enzyme catalyses ATP + H2O = ADP + phosphate + H(+). Its activity is regulated as follows. ATPase activity is enhanced by the suppressor of RNA silencing Gamma-B. In terms of biological role, participates in the transport of viral genome to neighboring plant cells directly through plasmodesmata, without any budding. Multifunctional movement protein with RNA-binding, ATPase and helicase activities. Engages in homologous interactions leading to the formation of a ribonucleoprotein complex containing plus-sense viral RNAs (vRNPs). ATPase activity is probably required for vRNPs movement complex assembly. Intracellular delivery of TGBp1-containing vRNPs to plasmodesmata is facilitated by TGBp2 and TGBp3. This is Movement protein TGB1 from Barley stripe mosaic virus (BSMV).